The following is a 673-amino-acid chain: UvrABC system protein B (673 aa).

In terms of domain architecture, Helicase ATP-binding spans 26–183 (ANFEAGLAKQ…RHLTDLQYTR (158 aa)). Residue 39-46 (GVTGSGKT) participates in ATP binding. The Beta-hairpin signature appears at 92–115 (YYDYYQPEAYVPSSDTFIEKDSSI). The Helicase C-terminal domain occupies 431–597 (QVDDLMSEIH…SVERPISDIM (167 aa)). A disordered region spans residues 601–631 (REDAAEKKSGKGRSKSRQVAEETPDYRAMKP). The segment covering 618 to 630 (QVAEETPDYRAMK) has biased composition (basic and acidic residues). Positions 635–670 (AGKLKSLEQKMYQHAKDLEFEAAAQIRDQIQKLKTA) constitute a UVR domain.

It belongs to the UvrB family. Forms a heterotetramer with UvrA during the search for lesions. Interacts with UvrC in an incision complex.

Its subcellular location is the cytoplasm. In terms of biological role, the UvrABC repair system catalyzes the recognition and processing of DNA lesions. A damage recognition complex composed of 2 UvrA and 2 UvrB subunits scans DNA for abnormalities. Upon binding of the UvrA(2)B(2) complex to a putative damaged site, the DNA wraps around one UvrB monomer. DNA wrap is dependent on ATP binding by UvrB and probably causes local melting of the DNA helix, facilitating insertion of UvrB beta-hairpin between the DNA strands. Then UvrB probes one DNA strand for the presence of a lesion. If a lesion is found the UvrA subunits dissociate and the UvrB-DNA preincision complex is formed. This complex is subsequently bound by UvrC and the second UvrB is released. If no lesion is found, the DNA wraps around the other UvrB subunit that will check the other stand for damage. This Xanthomonas oryzae pv. oryzae (strain PXO99A) protein is UvrABC system protein B.